A 68-amino-acid polypeptide reads, in one-letter code: Protein transport protein Sec61 subunit gamma (68 aa).

Residues 1 to 32 (MDQFQALIEPARQFSKDSYRLVKRCTKPDRKE) lie on the Cytoplasmic side of the membrane. A helical membrane pass occupies residues 33 to 61 (YQKIAMATAIGFAIMGFIGFFVKLIHIPI). Residues 62 to 68 (NNIIVGA) lie on the Extracellular side of the membrane.

Belongs to the SecE/SEC61-gamma family. In terms of assembly, heterotrimeric complex composed of SEC61-alpha, SEC61-beta and SEC61-gamma. In terms of tissue distribution, expressed in the germline. Expression in the germline is regulated in a sex- and meiotic cycle stage-specific manner. Expressed in somatic tissues including the intestine and somatic gonad. Expressed in the intestine more highly in hermaprodites than in males. In hermaphrodites, weakly expressed in the spermatheca.

The protein resides in the endoplasmic reticulum membrane. In terms of biological role, required for oocyte development and ovulation. Required for the translocation of secretory and transmembrane proteins into the endoplasmic reticulum in vitro. The protein is Protein transport protein Sec61 subunit gamma of Caenorhabditis elegans.